We begin with the raw amino-acid sequence, 303 residues long: Aspartate carbamoyltransferase catalytic subunit (303 aa).

2 residues coordinate carbamoyl phosphate: arginine 51 and threonine 52. Position 80 (lysine 80) interacts with L-aspartate. Carbamoyl phosphate contacts are provided by arginine 101, histidine 129, and glutamine 132. Arginine 162 and arginine 221 together coordinate L-aspartate. Positions 260 and 261 each coordinate carbamoyl phosphate.

The protein belongs to the aspartate/ornithine carbamoyltransferase superfamily. ATCase family. As to quaternary structure, heterooligomer of catalytic and regulatory chains.

The catalysed reaction is carbamoyl phosphate + L-aspartate = N-carbamoyl-L-aspartate + phosphate + H(+). It participates in pyrimidine metabolism; UMP biosynthesis via de novo pathway; (S)-dihydroorotate from bicarbonate: step 2/3. In terms of biological role, catalyzes the condensation of carbamoyl phosphate and aspartate to form carbamoyl aspartate and inorganic phosphate, the committed step in the de novo pyrimidine nucleotide biosynthesis pathway. This is Aspartate carbamoyltransferase catalytic subunit from Saccharolobus islandicus (strain M.14.25 / Kamchatka #1) (Sulfolobus islandicus).